A 437-amino-acid chain; its full sequence is Amino-acid acetyltransferase (437 aa).

Residues 289 to 429 (ENIRLATSFD…EHYNYQRMSK (141 aa)) form the N-acetyltransferase domain.

It belongs to the acetyltransferase family. ArgA subfamily.

The protein resides in the cytoplasm. The catalysed reaction is L-glutamate + acetyl-CoA = N-acetyl-L-glutamate + CoA + H(+). Its pathway is amino-acid biosynthesis; L-arginine biosynthesis; N(2)-acetyl-L-ornithine from L-glutamate: step 1/4. The polypeptide is Amino-acid acetyltransferase (Actinobacillus pleuropneumoniae serotype 3 (strain JL03)).